The chain runs to 143 residues: D-aminoacyl-tRNA deacylase (143 aa).

A Gly-cisPro motif, important for rejection of L-amino acids motif is present at residues 135 to 136; sequence GP.

The protein belongs to the DTD family. Homodimer.

It is found in the cytoplasm. It carries out the reaction glycyl-tRNA(Ala) + H2O = tRNA(Ala) + glycine + H(+). It catalyses the reaction a D-aminoacyl-tRNA + H2O = a tRNA + a D-alpha-amino acid + H(+). In terms of biological role, an aminoacyl-tRNA editing enzyme that deacylates mischarged D-aminoacyl-tRNAs. Also deacylates mischarged glycyl-tRNA(Ala), protecting cells against glycine mischarging by AlaRS. Acts via tRNA-based rather than protein-based catalysis; rejects L-amino acids rather than detecting D-amino acids in the active site. By recycling D-aminoacyl-tRNA to D-amino acids and free tRNA molecules, this enzyme counteracts the toxicity associated with the formation of D-aminoacyl-tRNA entities in vivo and helps enforce protein L-homochirality. The polypeptide is D-aminoacyl-tRNA deacylase (Mycolicibacterium smegmatis (strain ATCC 700084 / mc(2)155) (Mycobacterium smegmatis)).